Here is a 106-residue protein sequence, read N- to C-terminus: Molt-inhibiting hormone (106 aa).

The N-terminal stretch at 1 to 29 (MVNQVAQCFTVRRVWLVVVVGLLVHQTTA) is a signal peptide. Intrachain disulfides connect cysteine 36/cysteine 73, cysteine 53/cysteine 69, and cysteine 56/cysteine 82. Alanine 104 is modified (alanine amide). Positions 105–106 (GR) are excised as a propeptide.

Sinus gland of the eyestalk.

Its subcellular location is the secreted. Its function is as follows. Inhibits Y-organs where molting hormone (ecdysteroid) is secreted. A molting cycle is initiated when MIH secretion diminishes or stops. The sequence is that of Molt-inhibiting hormone from Faxonius limosus (Spinycheek crayfish).